We begin with the raw amino-acid sequence, 423 residues long: Imidazolonepropionase (423 aa).

Fe(3+)-binding residues include His-78 and His-80. Zn(2+) is bound by residues His-78 and His-80. Arg-87, Tyr-150, and His-183 together coordinate 4-imidazolone-5-propanoate. Tyr-150 serves as a coordination point for N-formimidoyl-L-glutamate. Fe(3+) is bound at residue His-247. A Zn(2+)-binding site is contributed by His-247. Glu-250 is a binding site for 4-imidazolone-5-propanoate. Asp-322 is a binding site for Fe(3+). Zn(2+) is bound at residue Asp-322. N-formimidoyl-L-glutamate-binding residues include Asn-324 and Gly-326. Ser-327 contributes to the 4-imidazolone-5-propanoate binding site.

Belongs to the metallo-dependent hydrolases superfamily. HutI family. Requires Zn(2+) as cofactor. Fe(3+) serves as cofactor.

It localises to the cytoplasm. It carries out the reaction 4-imidazolone-5-propanoate + H2O = N-formimidoyl-L-glutamate. The protein operates within amino-acid degradation; L-histidine degradation into L-glutamate; N-formimidoyl-L-glutamate from L-histidine: step 3/3. Functionally, catalyzes the hydrolytic cleavage of the carbon-nitrogen bond in imidazolone-5-propanoate to yield N-formimidoyl-L-glutamate. It is the third step in the universal histidine degradation pathway. This chain is Imidazolonepropionase, found in Bacillus mycoides (strain KBAB4) (Bacillus weihenstephanensis).